A 568-amino-acid polypeptide reads, in one-letter code: Protein adenylyltransferase SelO, mitochondrial (568 aa).

The ATP site is built by glycine 120, glycine 122, arginine 123, lysine 144, aspartate 156, glycine 157, arginine 208, and arginine 215. Aspartate 287 (proton acceptor) is an active-site residue. Residues asparagine 288 and aspartate 297 each contribute to the Mg(2+) site. Residue aspartate 297 coordinates ATP.

The protein belongs to the SELO family. Mg(2+) is required as a cofactor. In terms of processing, forms probably one or more intrachain disulfide bridges.

The protein resides in the mitochondrion. It carries out the reaction L-tyrosyl-[protein] + ATP = O-(5'-adenylyl)-L-tyrosyl-[protein] + diphosphate. Functionally, catalyzes the transfer of adenosine 5'-monophosphate (AMP) to Tyr residues of target mitochondrial proteins (AMPylation). Involved in redox homeostasis by regulating the cellular response to oxidative stress. Regulates protein S-glutathionylation levels possibly by AMPylation of deglutathionylation enzymes such as glutaredoxins. The chain is Protein adenylyltransferase SelO, mitochondrial from Schizosaccharomyces pombe (strain 972 / ATCC 24843) (Fission yeast).